The chain runs to 180 residues: Small ribosomal subunit protein uS4 (180 aa).

The region spanning 102–174 (RRLQTMLVRK…PARKLEQKEE (73 aa)) is the S4 RNA-binding domain. A disordered region spans residues 154–180 (VPFSPLANPEHPARKLEQKEETNEESA). The span at 164–174 (HPARKLEQKEE) shows a compositional bias: basic and acidic residues.

It belongs to the universal ribosomal protein uS4 family. In terms of assembly, part of the 30S ribosomal subunit. Contacts protein S5. The interaction surface between S4 and S5 is involved in control of translational fidelity.

In terms of biological role, one of the primary rRNA binding proteins, it binds directly to 16S rRNA where it nucleates assembly of the body of the 30S subunit. Its function is as follows. With S5 and S12 plays an important role in translational accuracy. The sequence is that of Small ribosomal subunit protein uS4 from Nanoarchaeum equitans (strain Kin4-M).